Here is a 360-residue protein sequence, read N- to C-terminus: Complement control protein homolog (360 aa).

The signal sequence occupies residues 1–20 (MYTLHYICLVLSCVIYFVWT). Sushi domains follow at residues 21–81 (LSCP…KCQK), 82–144 (KKCS…ICDI), 145–207 (KKCK…KCEF), and 208–266 (IFCK…ECMK). 8 cysteine pairs are disulfide-bonded: Cys23–Cys68, Cys54–Cys79, Cys84–Cys125, Cys111–Cys142, Cys147–Cys191, Cys175–Cys205, Cys210–Cys252, and Cys238–Cys264. N-linked (GlcNAc...) asparagine; by host glycans are attached at residues Asn36, Asn39, Asn46, and Asn72. Asn155 is a glycosylation site (N-linked (GlcNAc...) asparagine; by host). N-linked (GlcNAc...) asparagine; by host glycosylation occurs at Asn294. The chain crosses the membrane as a helical span at residues 328 to 350 (GVLVIILTTSFIIIGIILTGVCL).

Belongs to the receptors of complement activation (RCA) family.

The protein localises to the membrane. It localises to the secreted. The chain is Complement control protein homolog (4) from Saimiriine herpesvirus 2 (strain 11) (SaHV-2).